The chain runs to 137 residues: Nucleoside diphosphate kinase (137 aa).

The ATP site is built by Lys9, Phe57, Arg85, Thr91, Arg102, and Asn112. The active-site Pros-phosphohistidine intermediate is His115.

Belongs to the NDK family. In terms of assembly, homotetramer. Mg(2+) serves as cofactor.

It localises to the cytoplasm. The catalysed reaction is a 2'-deoxyribonucleoside 5'-diphosphate + ATP = a 2'-deoxyribonucleoside 5'-triphosphate + ADP. It carries out the reaction a ribonucleoside 5'-diphosphate + ATP = a ribonucleoside 5'-triphosphate + ADP. Its function is as follows. Major role in the synthesis of nucleoside triphosphates other than ATP. The ATP gamma phosphate is transferred to the NDP beta phosphate via a ping-pong mechanism, using a phosphorylated active-site intermediate. This Campylobacter hominis (strain ATCC BAA-381 / DSM 21671 / CCUG 45161 / LMG 19568 / NCTC 13146 / CH001A) protein is Nucleoside diphosphate kinase.